A 415-amino-acid chain; its full sequence is Casein kinase I isoform delta (415 aa).

Residues 9–277 (YRLGRKIGSG…YLRQLFRNLF (269 aa)) enclose the Protein kinase domain. Residues 15–23 (IGSGSFGDI) and Lys38 each bind ATP. Asp128 (proton acceptor) is an active-site residue. Positions 278 to 364 (HRQGFSYDYV…TSPRPVSGME (87 aa)) are centrosomal localization signal (CLS). Positions 301–315 (ADDAERERRDREERL) are enriched in basic and acidic residues. Positions 301–415 (ADDAERERRD…SSGLQSVVHR (115 aa)) are disordered. An autoinhibitory region spans residues 317 to 342 (HSRNPATRGLPSTASGRLRGTQEVAP). Residues Ser328 and Ser331 each carry the phosphoserine modification. A compositionally biased stretch (polar residues) spans 347–358 (TPTSHTANTSPR). Phosphoserine is present on Ser370. At Arg375 the chain carries Omega-N-methylarginine. Residues 380–400 (NVSSSDLTGRQDTSRMSTSQI) show a composition bias toward polar residues. Residues Ser382, Ser383, Ser384, Pro401, Ser407, and Ser411 each carry the phosphoserine modification.

Belongs to the protein kinase superfamily. CK1 Ser/Thr protein kinase family. Casein kinase I subfamily. As to quaternary structure, monomer. Component of the circadian core oscillator, which includes the CRY proteins, CLOCK, or NPAS2, BMAL1 or BMAL2, CSNK1D and/or CSNK1E, TIMELESS and the PER proteins. Interacts directly with PER1 and PER2 which may lead to their degradation. Interacts with MAP1A. Interacts with MAPT/TAU, DBNDD2, AIB1/NCOA3 and ESR1. Interacts with AKAP9/AKAP450; this interaction promotes centrosomal subcellular location. Binds to tubulins in mitotic cells upon DNA damage. Interacts with GJA1. Interacts with SNAPIN. Interacts with DNMT1. Interacts with DDX3X; this interaction enhances CSNK1D kinase activity in vitro, but it is unclear whether this interaction is physiologically relevant. Interacts with FAM83A, FAM83B, FAM83E and FAM83H (via DUF1669). In terms of processing, autophosphorylated on serine and threonine residues; this autophosphorylation represses activity. Reactivated by phosphatase-mediated dephosphorylation. May be dephosphorylated by PP1. Expressed ubiquitously. However, kinase activity is not uniform, with highest kinase activity in splenocytes.

It is found in the cytoplasm. Its subcellular location is the nucleus. It localises to the cytoskeleton. The protein localises to the microtubule organizing center. The protein resides in the centrosome. It is found in the perinuclear region. Its subcellular location is the cell membrane. It localises to the spindle. The protein localises to the golgi apparatus. It carries out the reaction L-seryl-[protein] + ATP = O-phospho-L-seryl-[protein] + ADP + H(+). The enzyme catalyses L-threonyl-[protein] + ATP = O-phospho-L-threonyl-[protein] + ADP + H(+). It catalyses the reaction L-seryl-[tau protein] + ATP = O-phospho-L-seryl-[tau protein] + ADP + H(+). The catalysed reaction is L-threonyl-[tau protein] + ATP = O-phospho-L-threonyl-[tau protein] + ADP + H(+). With respect to regulation, exhibits substrate-dependent heparin activation. Drug-mediated inhibition leads to a delay of the oscillations with the magnitude of this effect dependent upon the timing of drug administration. Inhibited by phosphorylation. In terms of biological role, essential serine/threonine-protein kinase that regulates diverse cellular growth and survival processes including Wnt signaling, DNA repair and circadian rhythms. It can phosphorylate a large number of proteins. Casein kinases are operationally defined by their preferential utilization of acidic proteins such as caseins as substrates. Phosphorylates connexin-43/GJA1, MAP1A, SNAPIN, MAPT/TAU, TOP2A, DCK, HIF1A, EIF6, p53/TP53, DVL2, DVL3, ESR1, AIB1/NCOA3, DNMT1, PKD2, YAP1, PER1 and PER2. Central component of the circadian clock. In balance with PP1, determines the circadian period length through the regulation of the speed and rhythmicity of PER1 and PER2 phosphorylation. Controls PER1 and PER2 nuclear transport and degradation. YAP1 phosphorylation promotes its SCF(beta-TRCP) E3 ubiquitin ligase-mediated ubiquitination and subsequent degradation. DNMT1 phosphorylation reduces its DNA-binding activity. Phosphorylation of ESR1 and AIB1/NCOA3 stimulates their activity and coactivation. Phosphorylation of DVL2 and DVL3 regulates WNT3A signaling pathway that controls neurite outgrowth. Phosphorylates NEDD9/HEF1. EIF6 phosphorylation promotes its nuclear export. Triggers down-regulation of dopamine receptors in the forebrain. Activates DCK in vitro by phosphorylation. TOP2A phosphorylation favors DNA cleavable complex formation. May regulate the formation of the mitotic spindle apparatus in extravillous trophoblast. Modulates connexin-43/GJA1 gap junction assembly by phosphorylation. Probably involved in lymphocyte physiology. Regulates fast synaptic transmission mediated by glutamate. In Mus musculus (Mouse), this protein is Casein kinase I isoform delta (Csnk1d).